Consider the following 250-residue polypeptide: 5'-nucleotidase SurE (250 aa).

A divalent metal cation is bound by residues aspartate 8, aspartate 9, serine 39, and asparagine 95.

Belongs to the SurE nucleotidase family. It depends on a divalent metal cation as a cofactor.

Its subcellular location is the cytoplasm. It carries out the reaction a ribonucleoside 5'-phosphate + H2O = a ribonucleoside + phosphate. Its function is as follows. Nucleotidase that shows phosphatase activity on nucleoside 5'-monophosphates. The polypeptide is 5'-nucleotidase SurE (Cupriavidus taiwanensis (strain DSM 17343 / BCRC 17206 / CCUG 44338 / CIP 107171 / LMG 19424 / R1) (Ralstonia taiwanensis (strain LMG 19424))).